A 98-amino-acid chain; its full sequence is EKC/KEOPS complex subunit GON7 (98 aa).

Methionine 1 is modified (N-acetylmethionine). Residues aspartate 55–serine 98 form a disordered region. Positions glutamate 61–asparagine 79 are enriched in acidic residues.

As to quaternary structure, component of the EKC/KEOPS complex composed of at least GON7, TP53RK, TPRKB, OSGEP and LAGE3; the whole complex dimerizes.

It localises to the nucleus. Functionally, component of the EKC/KEOPS complex that is required for the formation of a threonylcarbamoyl group on adenosine at position 37 (t(6)A37) in tRNAs that read codons beginning with adenine. The complex is probably involved in the transfer of the threonylcarbamoyl moiety of threonylcarbamoyl-AMP (TC-AMP) to the N6 group of A37. GON7 plays a supporting role to the catalytic subunit OSGEP in the complex. The chain is EKC/KEOPS complex subunit GON7 from Mus musculus (Mouse).